We begin with the raw amino-acid sequence, 648 residues long: MKQSHKTLLLWVLLIMMFLAIWQFLSPDSRPATQVAFSEFMAQVQVEAKDKDPHVESVTIKDREYTFWVKDPKSGTKTKKVTIGPDNADEITKTIVDNKVAVFFEKEDTSPFWPGAIMYLLPTVFLLVMFYLFMRQLQAGGGKAMSFGKSRARLLSEAQNKVTFADVAGIDEAKDELEEIIAFLKDPKKFQKLGGRIPKGVLMMGPPGTGKTLLARAIAGEAGVPFFSISGSDFVEMFVGVGASRVRDLFEQGKKHAPCIIFIDEIDAVGRHRGAGLGGGHDEREQTLNQLLVEMDGFESNEGVIIVAATNRPDVLDPAILRPGRFDRRIVVNRPDVRGREGILRVHTKKVPLGPDVDMEILARGTPGFVGADIENLVNEAALLAARQDKDVVSMVDFEMAKDKVLMGAERRSMVISDEEKRTTAYHEAGHALVAKLLEKFSDPVHKVTIIPRGPALGLTQQLPKEDRLSMSRDFAKARLSVLMGGRVAEEIVFGQFTTGAGNDIKQASNLARRMVTEFGMSDVIGPISYGADEESVFLGRDFTSRRRDYSETIANQIDDEVRRFILDAHAEARQLLTDNREILERLATALLERETLDAEEVDAIVGGRELPQRQRVVIPSYSDRDRAAKEKRRAASIFGTPKPAPST.

The Cytoplasmic segment spans residues 1 to 6 (MKQSHK). A helical membrane pass occupies residues 7 to 27 (TLLLWVLLIMMFLAIWQFLSP). Residues 28–111 (DSRPATQVAF…VFFEKEDTSP (84 aa)) are Periplasmic-facing. A helical membrane pass occupies residues 112–132 (FWPGAIMYLLPTVFLLVMFYL). Residues 133–648 (FMRQLQAGGG…FGTPKPAPST (516 aa)) are Cytoplasmic-facing. 205–212 (GPPGTGKT) provides a ligand contact to ATP. H427 contributes to the Zn(2+) binding site. E428 is an active-site residue. Residues H431 and D504 each contribute to the Zn(2+) site. Residues 622 to 648 (YSDRDRAAKEKRRAASIFGTPKPAPST) are disordered.

It in the central section; belongs to the AAA ATPase family. In the C-terminal section; belongs to the peptidase M41 family. Homohexamer. Zn(2+) serves as cofactor.

It localises to the cell inner membrane. Functionally, acts as a processive, ATP-dependent zinc metallopeptidase for both cytoplasmic and membrane proteins. Plays a role in the quality control of integral membrane proteins. This chain is ATP-dependent zinc metalloprotease FtsH 4, found in Sorangium cellulosum (strain So ce56) (Polyangium cellulosum (strain So ce56)).